The chain runs to 120 residues: Nitrogen regulatory protein GlnK3 (120 aa).

ADP-binding positions include threonine 40 and 48 to 50; that span reads GEQ. ATP contacts are provided by residues threonine 40 and 48–50; that span reads GEQ. 2-oxoglutarate-binding positions include 48 to 52 and lysine 69; that span reads GEQKG. Residues valine 75 and 98–101 each bind ADP; that span reads GDGR. ATP contacts are provided by residues valine 75 and 98-101; that span reads GDGR. Residue glycine 98 participates in 2-oxoglutarate binding.

The protein belongs to the P(II) protein family. In terms of assembly, homotrimer. Interacts and forms a complex with Amt3.

It localises to the cytoplasm. Its activity is regulated as follows. Activity is influenced by intracellular pools of the effector molecules ATP, ADP and 2-oxoglutarate. It senses the cellular nitrogen status through 2-oxoglutarate, and the energy level of the cell by binding both ATP and ADP with different affinities. ATP and 2-oxoglutarate prohibit binding to Amt3. ADP promotes the complex formation. In terms of biological role, involved in the regulation of nitrogen metabolism. Regulates the activity of its targets by protein-protein interaction in response to the nitrogen status of the cell. Regulates the activity of the ammonia channel Amt3 via direct interaction. The protein is Nitrogen regulatory protein GlnK3 of Archaeoglobus fulgidus (strain ATCC 49558 / DSM 4304 / JCM 9628 / NBRC 100126 / VC-16).